The sequence spans 1546 residues: Mediator of RNA polymerase II transcription subunit 14 (1546 aa).

2 consecutive short sequence motifs (LXXLL motif) follow at residues 51 to 55 and 468 to 472; these read LAELL and LPSLL. Disordered regions lie at residues 692 to 717, 1000 to 1193, and 1512 to 1546; these read KSATAAGQQPQQGAASAAGTAPPSGS, GRAP…NRPW, and NPMMPMQQLQPQVGPQGQVGPGGYPQLGPNPGGPQ. Composition is skewed to low complexity over residues 693-717, 1020-1035, and 1061-1075; these read SATAAGQQPQQGAASAAGTAPPSGS, GGPSSVTGVSAGGSSP, and PSSSNPHTPASPHPS. A compositionally biased stretch (pro residues) spans 1093 to 1102; sequence PPAPHMPHPS. Positions 1125 to 1149 are enriched in polar residues; it reads GPNTLYMQSHQDSPFTAMSPANNQW. A compositionally biased stretch (pro residues) spans 1153–1163; sequence PSMPRPSPRPG. A compositionally biased stretch (low complexity) spans 1515–1527; the sequence is MPMQQLQPQVGPQ.

The protein belongs to the Mediator complex subunit 14 family. In terms of assembly, component of the Mediator complex.

It localises to the nucleus. Component of the Mediator complex, a coactivator involved in the regulated transcription of nearly all RNA polymerase II-dependent genes. Mediator functions as a bridge to convey information from gene-specific regulatory proteins to the basal RNA polymerase II transcription machinery. Mediator is recruited to promoters by direct interactions with regulatory proteins and serves as a scaffold for the assembly of a functional preinitiation complex with RNA polymerase II and the general transcription factors. The sequence is that of Mediator of RNA polymerase II transcription subunit 14 (MED14) from Drosophila pseudoobscura pseudoobscura (Fruit fly).